Here is a 267-residue protein sequence, read N- to C-terminus: Glucosamine-6-phosphate deaminase (267 aa).

Aspartate 72 serves as the catalytic Proton acceptor; for enolization step. The active-site For ring-opening step is the aspartate 141. The active-site Proton acceptor; for ring-opening step is histidine 143. The For ring-opening step role is filled by glutamate 148.

Belongs to the glucosamine/galactosamine-6-phosphate isomerase family. NagB subfamily. As to quaternary structure, homohexamer.

It catalyses the reaction alpha-D-glucosamine 6-phosphate + H2O = beta-D-fructose 6-phosphate + NH4(+). It functions in the pathway amino-sugar metabolism; N-acetylneuraminate degradation; D-fructose 6-phosphate from N-acetylneuraminate: step 5/5. With respect to regulation, allosterically activated by N-acetylglucosamine 6-phosphate (GlcNAc6P). In terms of biological role, catalyzes the reversible isomerization-deamination of glucosamine 6-phosphate (GlcN6P) to form fructose 6-phosphate (Fru6P) and ammonium ion. This chain is Glucosamine-6-phosphate deaminase, found in Actinobacillus pleuropneumoniae serotype 5b (strain L20).